The following is a 340-amino-acid chain: L-threonine 3-dehydrogenase (340 aa).

Residue Cys38 participates in Zn(2+) binding. Residues Thr40 and His43 each act as charge relay system in the active site. His63, Glu64, Cys93, Cys96, Cys99, and Cys107 together coordinate Zn(2+). NAD(+) is bound by residues Ile175, Asp195, Arg200, 261 to 263 (LGI), and 285 to 286 (IY).

This sequence belongs to the zinc-containing alcohol dehydrogenase family. Homotetramer. Zn(2+) is required as a cofactor.

It is found in the cytoplasm. It carries out the reaction L-threonine + NAD(+) = (2S)-2-amino-3-oxobutanoate + NADH + H(+). Its pathway is amino-acid degradation; L-threonine degradation via oxydo-reductase pathway; glycine from L-threonine: step 1/2. In terms of biological role, catalyzes the NAD(+)-dependent oxidation of L-threonine to 2-amino-3-ketobutyrate. The polypeptide is L-threonine 3-dehydrogenase (Stenotrophomonas maltophilia (strain K279a)).